The chain runs to 601 residues: MKEFQRMLMLQYSKHGECILKEIGAAFRGEHPADLTIVCENKVKLHAHKLVLAAASPLIRNLLEDTHLSDCSTTVYFPDVNATYFKFLLDFLYSGQTCITSRDVNYLHDLLLLLQIKSDSWKTTDSAYLSSKCGGLRDRADRRKQQYTSPQNLEPDQTLKYEVDSVDESRNAADFSSAFNSNDNCESAAECERSGGHNNKEEDEDDCTHKDNKSDKDTDEIVNLSNAPPSGTSGSNSNISTSSNHQQQQHHHHHHHNHNNNNNNNNNNSSSSTINPVNLSLDLRTKSENSASRTLGSGSDHSGIDLAVTASESTKRKGLFFDSHKDVMKPLSDGSDINSSPENYVVTPHRKRRPGFHNTQSDNQPFTSYPHSLLEELRLAKSTTSPISGFGSEKNMLAHLEDGALNGDTLTPDRKHLLEAQRNRAQSPEIPMHLGPQFVYQWQSNQNAAMSAMPNLQSRLSSLSHISLNLDHPEGRSGSASGSGANLAGSNTHASSVREYRCEYCGKQFGMSWNLKTHLRVHTGEKPFACRLCVAMFKQKAHLLKHLCSVHRNVITTTNGADTENRYSCCFCSMCFESVQELVRHLSGHHNNLLLTKNLRE.

Positions 33–101 (ADLTIVCENK…LYSGQTCITS (69 aa)) constitute a BTB domain. Disordered regions lie at residues 188–276 (AAEC…TINP), 331–365 (LSDG…DNQP), and 471–491 (DHPE…AGSN). Basic and acidic residues-rich tracts occupy residues 190-200 (ECERSGGHNNK) and 207-216 (CTHKDNKSDK). The span at 223–234 (NLSNAPPSGTSG) shows a compositional bias: polar residues. Positions 235-247 (SNSNISTSSNHQQ) are enriched in low complexity. Basic residues predominate over residues 248-258 (QQHHHHHHHNH). Residues 259–275 (NNNNNNNNNNSSSSTIN) show a composition bias toward low complexity. Residues 476-490 (RSGSASGSGANLAGS) are compositionally biased toward low complexity. 3 C2H2-type zinc fingers span residues 500 to 522 (YRCE…LRVH), 528 to 551 (FACR…CSVH), and 567 to 590 (YSCC…SGHH).

As to expression, expressed from stage 5 in two rather faint stripes at positions of 64% (anterior domain; AD) and 17% (posterior domain; PD) egg length. During early gastrulation, at stage 6, these two stripes become more evident and detectable at the region posterior to the cephalic furrow and in the hindgut primordium. The AD disappears as gastrulation proceeds, while the PD remains. At stage 15, the AD appears again in the foregut, and PD expression in the hindgut and anal pad. In imaginal disks, it is ubiquitously expressed in both males and females in genital and eye-antennal disks. Not expressed in the brain. In genital disks, it is expressed along the margin of the anterior bulbus in males, while in females it is expressed in the posterior compartment along the anterior-posterior border, with medial expansion in the most posterior region.

It localises to the nucleus. Its function is as follows. Transcription factor required for terminalia development. Negative regulator of the JAK/STAT pathway: represses JAK/STAT-dependent expression of ventral veins lacking (vvl) in the posterior spiracles. The polypeptide is Transcription factor Ken (ken) (Drosophila melanogaster (Fruit fly)).